A 370-amino-acid polypeptide reads, in one-letter code: 3-dehydroquinate synthase (370 aa).

NAD(+)-binding positions include 112-116, 136-137, Lys-149, Lys-158, and 176-179; these read GVVGD, TS, and TLRT. Residues Glu-191, His-254, and His-276 each coordinate Zn(2+).

The protein belongs to the sugar phosphate cyclases superfamily. Dehydroquinate synthase family. Co(2+) serves as cofactor. The cofactor is Zn(2+). It depends on NAD(+) as a cofactor.

The protein resides in the cytoplasm. The catalysed reaction is 7-phospho-2-dehydro-3-deoxy-D-arabino-heptonate = 3-dehydroquinate + phosphate. The protein operates within metabolic intermediate biosynthesis; chorismate biosynthesis; chorismate from D-erythrose 4-phosphate and phosphoenolpyruvate: step 2/7. Functionally, catalyzes the conversion of 3-deoxy-D-arabino-heptulosonate 7-phosphate (DAHP) to dehydroquinate (DHQ). This chain is 3-dehydroquinate synthase, found in Xanthomonas oryzae pv. oryzae (strain MAFF 311018).